The sequence spans 198 residues: Peroxiredoxin-2 (198 aa).

At alanine 2 the chain carries N-acetylalanine. The Thioredoxin domain maps to 6–164 (AHIGKPAPDF…ALRLVQAFQY (159 aa)). Cysteine 51 (cysteine sulfenic acid (-SOH) intermediate) is an active-site residue. At serine 112 the chain carries Phosphoserine. A Phosphothreonine modification is found at threonine 182. An N6-acetyllysine modification is found at lysine 196.

The protein belongs to the peroxiredoxin family. AhpC/Prx1 subfamily. In terms of assembly, homodimer; disulfide-linked, upon oxidation. 5 homodimers assemble to form a ring-like decamer. Interacts with TIPIN. Post-translationally, the enzyme can be inactivated by further oxidation of the cysteine sulfenic acid (C(P)-SOH) to sulphinic acid (C(P)-SO2H) instead of its condensation to a disulfide bond. It can be reactivated by forming a transient disulfide bond with sulfiredoxin SRXN1, which reduces the cysteine sulfinic acid in an ATP- and Mg-dependent manner. In terms of processing, acetylation increases resistance to transition to high molecular-mass complexes. Deacetylated by HDAC6 which decreases reducing activity.

It is found in the cytoplasm. It catalyses the reaction a hydroperoxide + [thioredoxin]-dithiol = an alcohol + [thioredoxin]-disulfide + H2O. Thiol-specific peroxidase that catalyzes the reduction of hydrogen peroxide and organic hydroperoxides to water and alcohols, respectively. Plays a role in cell protection against oxidative stress by detoxifying peroxides and as sensor of hydrogen peroxide-mediated signaling events. Might participate in the signaling cascades of growth factors and tumor necrosis factor-alpha by regulating the intracellular concentrations of H(2)O(2). The polypeptide is Peroxiredoxin-2 (Prdx2) (Rattus norvegicus (Rat)).